The chain runs to 459 residues: UDP-N-acetylmuramate--L-alanine ligase (459 aa).

Residue 118–124 participates in ATP binding; it reads GTHGKTT.

Belongs to the MurCDEF family.

It localises to the cytoplasm. The catalysed reaction is UDP-N-acetyl-alpha-D-muramate + L-alanine + ATP = UDP-N-acetyl-alpha-D-muramoyl-L-alanine + ADP + phosphate + H(+). The protein operates within cell wall biogenesis; peptidoglycan biosynthesis. Functionally, cell wall formation. This Clostridium beijerinckii (strain ATCC 51743 / NCIMB 8052) (Clostridium acetobutylicum) protein is UDP-N-acetylmuramate--L-alanine ligase.